A 188-amino-acid polypeptide reads, in one-letter code: Elongation factor P (188 aa).

N6-(3,6-diaminohexanoyl)-5-hydroxylysine is present on K34.

The protein belongs to the elongation factor P family. In terms of processing, may be beta-lysylated on the epsilon-amino group of Lys-34 by the combined action of EpmA and EpmB, and then hydroxylated on the C5 position of the same residue by EpmC (if this protein is present). Lysylation is critical for the stimulatory effect of EF-P on peptide-bond formation. The lysylation moiety may extend toward the peptidyltransferase center and stabilize the terminal 3-CCA end of the tRNA. Hydroxylation of the C5 position on Lys-34 may allow additional potential stabilizing hydrogen-bond interactions with the P-tRNA.

The protein resides in the cytoplasm. Its pathway is protein biosynthesis; polypeptide chain elongation. In terms of biological role, involved in peptide bond synthesis. Alleviates ribosome stalling that occurs when 3 or more consecutive Pro residues or the sequence PPG is present in a protein, possibly by augmenting the peptidyl transferase activity of the ribosome. Modification of Lys-34 is required for alleviation. The protein is Elongation factor P of Coxiella burnetii (strain CbuG_Q212) (Coxiella burnetii (strain Q212)).